The following is a 755-amino-acid chain: LIM domain and actin-binding protein 1 (755 aa).

Position 1 is an N-acetylmethionine (M1). S15 carries the phosphoserine modification. Basic and acidic residues predominate over residues 43-56 (KAAEEANMERKKNN). The segment at 43 to 151 (KAAEEANMER…YPRSEDSHDF (109 aa)) is disordered. Residues 88–97 (DSLPNSSSDG) show a composition bias toward polar residues. Position 132 is a phosphoserine (S132). Positions 164–166 (CLG) match the Required for interaction with NPC1L1 motif. 2 stretches are compositionally biased toward basic and acidic residues: residues 168-177 (SRHEAEKPEM) and 199-208 (MMFEKGEHSQ). The interval 168 to 226 (SRHEAEKPEMSENTETSGKIEKYNVPLNRLKMMFEKGEHSQNKSPWTQGRNAGGRRLSE) is disordered. 3 positions are modified to phosphoserine: S225, S230, and S242. The disordered stretch occupies residues 241-379 (LSSSAFNSEK…ESSPSKTAKK (139 aa)). The segment covering 249 to 258 (EKNESKRNLE) has biased composition (basic and acidic residues). At S263 the chain carries Phosphoserine. Over residues 292 to 305 (KPSESKTHKWEQKE) the composition is skewed to basic and acidic residues. The segment covering 342–354 (CNSQGRSEAQQPI) has biased composition (polar residues). A phosphoserine mark is found at S348, S360, S367, and S372. Positions 363–375 (ARTSSLPESSPSK) are enriched in polar residues. The region spanning 386-446 (ESCVECQKTV…KPHFNQLFKS (61 aa)) is the LIM zinc-binding domain. At K437 the chain carries N6-succinyllysine. Disordered stretches follow at residues 468–493 (ENEETLGRPAQPPSAGETPHSPGVED) and 505–714 (SMEA…DTTT). S488 carries the phosphoserine modification. The segment at 491-511 (VEDAPIAKVGVLAASMEAKAS) is required for interaction with MYO5B. 2 stretches are compositionally biased toward basic and acidic residues: residues 512 to 526 (SQREREENKPAETKK) and 555 to 566 (WPPEDEVCKTEA). Over residues 599–611 (SSVKSPKPLSPSL) the composition is skewed to low complexity. A phosphoserine mark is found at S600, S603, S608, and S616. Composition is skewed to basic and acidic residues over residues 638–653 (RPSREKESVGKSRWQS) and 662–673 (EAPRGRDGRSFE). Residues S697, S722, and S737 each carry the phosphoserine modification.

In terms of assembly, interacts with NPC1L1; bridges NPC1L1 with MYO5B. Interacts with MYO5B; bridges MYO5B with NPC1L1. Interacts with PXN; this complex stabilizes actin dynamics. Interacts with F-actin and G-actin. Interacts with LUZP1 (via C-terminus); both proteins restrict ciliation and may work together to regulate this process. Binds RAB40B (GTP-bound); interaction influences LIMA1 subcellular localization in lamellipodia during cell migration. Phosphorylation of the C-terminal region by MAPK1/MAPK3 reduces its association with F-actin and contributes to actin filament reorganization and enhanced cell motility. In terms of processing, ubiquitinated by the ECS(RAB40B) complex leading to its degradation. As to expression, expressed throughout the kidney, including renal cortex, medulla, and glomeruli. Expressed in glomeruli, tubular epithelial cells, and extraglomerular vascular endothelial cells (at protein level).

It is found in the cytoplasm. The protein localises to the cell junction. It localises to the focal adhesion. Its subcellular location is the cytoskeleton. The protein resides in the stress fiber. It is found in the cell membrane. The protein localises to the cell projection. It localises to the ruffle. Its subcellular location is the lamellipodium. Its function is as follows. Actin-binding protein involved in actin cytoskeleton regulation and dynamics. Increases the number and size of actin stress fibers and inhibits membrane ruffling. Inhibits actin filament depolymerization. Bundles actin filaments, delays filament nucleation and reduces formation of branched filaments. Acts as a negative regulator of primary cilium formation. Plays a role in cholesterol homeostasis. Influences plasma cholesterol levels through regulation of intestinal cholesterol absorption. May act as a scaffold protein by regulating NPC1L1 transportation, an essential protein for cholesterol absorption, to the plasma membrane by recruiting MYO5B to NPC1L1, and thus facilitates cholesterol uptake. This is LIM domain and actin-binding protein 1 from Rattus norvegicus (Rat).